Consider the following 331-residue polypeptide: Polysaccharide lyase (331 aa).

A signal peptide spans 1-22; the sequence is MSLPLRLALLPTLLASASAFAA. Residue Cys23 is the site of N-palmitoyl cysteine attachment. Cys23 carries S-diacylglycerol cysteine lipidation.

Belongs to the polysaccharide lyase 5 family.

Its subcellular location is the cell outer membrane. It carries out the reaction Eliminative cleavage of alginate to give oligosaccharides with 4-deoxy-alpha-L-erythro-hex-4-enuronosyl groups at their non-reducing ends and beta-D-mannuronate at their reducing end.. It catalyses the reaction [hyaluronan](n) = n 3-(4-deoxy-beta-D-gluc-4-enuronosyl)-N-acetyl-D-glucosamine + H2O. The enzyme catalyses Eliminative cleavage of (1-&gt;4)-beta-D-glucuronans to give oligosaccharides with 4-deoxy-beta-D-gluc-4-enuronosyl groups at their non-reducing ends. Complete degradation of glucuronans results in the formation of tetrasaccharides.. With respect to regulation, is inhibited by mono- and divalent cations as well as L-ascorbic acid 6-hexadecanoate. Its function is as follows. Polysaccharide lyase that catalyzes the depolymerization of several anionic polysaccharides via a beta-elimination mechanism. Exhibits broad substrate specificity, catalyzing the degradation of not only alginate and poly-beta-D-mannuronate (poly-ManA), but poly-beta-D-glucuronate (poly-GlcA or poly-GlcUA) and hyaluronate (HA) as well. The oligosaccharide products formed by enzymatic cleavage are comprised mainly of disaccharides, with a lower abundance of trimers and pentamers. Is not active on poly-D-galacturonate, heparin and heparin sulfate. This Stenotrophomonas maltophilia (strain K279a) protein is Polysaccharide lyase.